We begin with the raw amino-acid sequence, 365 residues long: Methylthioribose-1-phosphate isomerase (365 aa).

Substrate-binding positions include 53 to 55, arginine 90, and glutamine 201; that span reads RGA. The active-site Proton donor is the aspartate 242. A substrate-binding site is contributed by 252–253; it reads NK.

This sequence belongs to the eIF-2B alpha/beta/delta subunits family. MtnA subfamily.

The catalysed reaction is 5-(methylsulfanyl)-alpha-D-ribose 1-phosphate = 5-(methylsulfanyl)-D-ribulose 1-phosphate. Its pathway is amino-acid biosynthesis; L-methionine biosynthesis via salvage pathway; L-methionine from S-methyl-5-thio-alpha-D-ribose 1-phosphate: step 1/6. Functionally, catalyzes the interconversion of methylthioribose-1-phosphate (MTR-1-P) into methylthioribulose-1-phosphate (MTRu-1-P). The chain is Methylthioribose-1-phosphate isomerase from Methylorubrum populi (strain ATCC BAA-705 / NCIMB 13946 / BJ001) (Methylobacterium populi).